Reading from the N-terminus, the 95-residue chain is ESAT-6-like protein EsxA (95 aa).

The protein belongs to the WXG100 family. ESAT-6 subfamily. In terms of assembly, forms a tight 1:1 complex with EsxB. An artificial EsxA-EsxB heterodimer interacts with EspA.

The protein localises to the secreted. In terms of biological role, an exported protein. Unlike its M.tuberculosis counterpart has poor pore forming ability in artificial liposomes, does not undergo conformational change at acidic pH. Mutation of 2 residues to those found in M.tuberculosis (25-TA-26 to IH) alters the properties of this protein so that it inserts into liposomes at acidic pH, forming pores, like its M.tuberculosis counterpart. The chain is ESAT-6-like protein EsxA from Mycolicibacterium smegmatis (strain ATCC 700084 / mc(2)155) (Mycobacterium smegmatis).